The following is a 233-amino-acid chain: Phosphatidylserine decarboxylase proenzyme (233 aa).

The active-site Schiff-base intermediate with substrate; via pyruvic acid is the Ser190. At Ser190 the chain carries Pyruvic acid (Ser); by autocatalysis.

The protein belongs to the phosphatidylserine decarboxylase family. PSD-A subfamily. As to quaternary structure, heterodimer of a large membrane-associated beta subunit and a small pyruvoyl-containing alpha subunit. Pyruvate serves as cofactor. Post-translationally, is synthesized initially as an inactive proenzyme. Formation of the active enzyme involves a self-maturation process in which the active site pyruvoyl group is generated from an internal serine residue via an autocatalytic post-translational modification. Two non-identical subunits are generated from the proenzyme in this reaction, and the pyruvate is formed at the N-terminus of the alpha chain, which is derived from the carboxyl end of the proenzyme. The post-translation cleavage follows an unusual pathway, termed non-hydrolytic serinolysis, in which the side chain hydroxyl group of the serine supplies its oxygen atom to form the C-terminus of the beta chain, while the remainder of the serine residue undergoes an oxidative deamination to produce ammonia and the pyruvoyl prosthetic group on the alpha chain.

It localises to the cell membrane. It carries out the reaction a 1,2-diacyl-sn-glycero-3-phospho-L-serine + H(+) = a 1,2-diacyl-sn-glycero-3-phosphoethanolamine + CO2. It functions in the pathway phospholipid metabolism; phosphatidylethanolamine biosynthesis; phosphatidylethanolamine from CDP-diacylglycerol: step 2/2. Catalyzes the formation of phosphatidylethanolamine (PtdEtn) from phosphatidylserine (PtdSer). This is Phosphatidylserine decarboxylase proenzyme from Azorhizobium caulinodans (strain ATCC 43989 / DSM 5975 / JCM 20966 / LMG 6465 / NBRC 14845 / NCIMB 13405 / ORS 571).